A 296-amino-acid polypeptide reads, in one-letter code: Bifunctional protein FolD (296 aa).

NADP(+)-binding positions include 166 to 168, S195, and T236; that span reads GRS.

It belongs to the tetrahydrofolate dehydrogenase/cyclohydrolase family. As to quaternary structure, homodimer.

The enzyme catalyses (6R)-5,10-methylene-5,6,7,8-tetrahydrofolate + NADP(+) = (6R)-5,10-methenyltetrahydrofolate + NADPH. The catalysed reaction is (6R)-5,10-methenyltetrahydrofolate + H2O = (6R)-10-formyltetrahydrofolate + H(+). The protein operates within one-carbon metabolism; tetrahydrofolate interconversion. Catalyzes the oxidation of 5,10-methylenetetrahydrofolate to 5,10-methenyltetrahydrofolate and then the hydrolysis of 5,10-methenyltetrahydrofolate to 10-formyltetrahydrofolate. This is Bifunctional protein FolD from Dehalococcoides mccartyi (strain ATCC BAA-2100 / JCM 16839 / KCTC 5957 / BAV1).